The following is a 208-amino-acid chain: Phosphoheptose isomerase (208 aa).

Residues 38-200 (MALTLARGRK…LFENVLALQP (163 aa)) form the SIS domain. 53–55 (NGG) contributes to the substrate binding site. Positions 62 and 66 each coordinate Zn(2+). Residues glutamate 66, 95 to 96 (ND), 121 to 123 (STS), serine 126, and glutamine 173 each bind substrate. Residues glutamine 173 and histidine 181 each coordinate Zn(2+).

It belongs to the SIS family. GmhA subfamily. Homotetramer. Zn(2+) serves as cofactor.

It is found in the cytoplasm. It catalyses the reaction 2 D-sedoheptulose 7-phosphate = D-glycero-alpha-D-manno-heptose 7-phosphate + D-glycero-beta-D-manno-heptose 7-phosphate. It participates in carbohydrate biosynthesis; D-glycero-D-manno-heptose 7-phosphate biosynthesis; D-glycero-alpha-D-manno-heptose 7-phosphate and D-glycero-beta-D-manno-heptose 7-phosphate from sedoheptulose 7-phosphate: step 1/1. In terms of biological role, catalyzes the isomerization of sedoheptulose 7-phosphate in D-glycero-D-manno-heptose 7-phosphate. The chain is Phosphoheptose isomerase from Nitratidesulfovibrio vulgaris (strain DSM 19637 / Miyazaki F) (Desulfovibrio vulgaris).